We begin with the raw amino-acid sequence, 981 residues long: Anoctamin-3 (981 aa).

The segment covering 1–28 has biased composition (polar residues); sequence MVHHSGSIQSFKQQKGMNISKSEITTEA. Disordered stretches follow at residues 1-32 and 67-87; these read MVHHSGSIQSFKQQKGMNISKSEITTEASLKP and PTSVTFLSADKPEHVTSEESR. Residues 1–403 lie on the Cytoplasmic side of the membrane; that stretch reads MVHHSGSIQS…LYFAWLGWYT (403 aa). Over residues 76 to 87 the composition is skewed to basic and acidic residues; the sequence is DKPEHVTSEESR. A helical transmembrane segment spans residues 404–424; the sequence is GMLIPAAVVGLCVFFYGLVTM. N425, N448, and N455 each carry an N-linked (GlcNAc...) asparagine glycan. Residues 425–469 lie on the Extracellular side of the membrane; that stretch reads NESQVSQEICKATEVFMCPLCDKNCSLQRLNDSCIYAKVTYLFDN. A helical transmembrane segment spans residues 470–490; it reads GGTVFFAIFMAIWATVFLEFW. Topologically, residues 491-550 are cytoplasmic; it reads KRRRSILTYTWDLIEWEEEEETLRPQFEAKYYRMEVINPITGKPEPHQPSSDKVTRLLVS. A helical membrane pass occupies residues 551–571; it reads VSGIFFMISLVITAVFAVVVY. At 572–592 the chain is on the extracellular side; it reads RLVVMEQFASFKWNFVKQHWQ. Residues 593–613 traverse the membrane as a helical segment; the sequence is FATSGAAVCINFIIIMLLNLA. Residues 614–640 are Cytoplasmic-facing; it reads YEKIAYLLTNLEYPRTESEWENSFALK. Residues 641–661 form a helical membrane-spanning segment; that stretch reads MFLFQFVNLNSSIFYIAFFLG. Residues 662 to 761 are Extracellular-facing; sequence RFVGHPGKYN…MDEYLEMVLQ (100 aa). A helical membrane pass occupies residues 762 to 782; the sequence is FGFTTIFVAAFPLAPLLALLN. Residues 783 to 810 are Cytoplasmic-facing; sequence NIIEIRLDAYKFVTQWRRPLPARATDIG. A helical transmembrane segment spans residues 811–831; that stretch reads IWLGILEGIGILAVITNAFVI. Residues 832-914 are Extracellular-facing; it reads AITSDYIPRF…QYWHILAARL (83 aa). N-linked (GlcNAc...) asparagine glycosylation is present at N866. A helical membrane pass occupies residues 915 to 935; the sequence is AFIIVFEHLVFGIKSFIAYLI. The Cytoplasmic portion of the chain corresponds to 936–981; it reads PDIPKGLRERIRREKYLVQEMMYEAELEHLQQQRRKSGQPIHHEWP.

The protein belongs to the anoctamin family. As to quaternary structure, interacts with KCNT1/Slack. Predominantly expressed in neuronal tissues. Expressed in brain.

The protein resides in the cell membrane. The enzyme catalyses a 1,2-diacyl-sn-glycero-3-phosphocholine(in) = a 1,2-diacyl-sn-glycero-3-phosphocholine(out). It catalyses the reaction a beta-D-galactosyl-(1&lt;-&gt;1')-N-acylsphing-4-enine(out) = a beta-D-galactosyl-(1&lt;-&gt;1')-N-acylsphing-4-enine(in). Functionally, has calcium-dependent phospholipid scramblase activity; scrambles phosphatidylcholine and galactosylceramide. Does not exhibit calcium-activated chloride channel (CaCC) activity. Seems to act as potassium channel regulator and may inhibit pain signaling; can facilitate KCNT1/Slack channel activity by promoting its full single-channel conductance at very low sodium concentrations and by increasing its sodium sensitivity. This chain is Anoctamin-3, found in Mus musculus (Mouse).